The primary structure comprises 767 residues: Protein SQS1 (767 aa).

The segment covering 1–17 has biased composition (basic residues); the sequence is MAKRHSHYQGSRRRHAR. The disordered stretch occupies residues 1–60; that stretch reads MAKRHSHYQGSRRRHARGSNSKKAGRGNAKGIQGRKIKKKPTPTNSWHNSSIPLGEGDLD. The span at 42–52 shows a compositional bias: polar residues; it reads TPTNSWHNSSI. S105 carries the phosphoserine modification. Positions 176 to 185 are enriched in acidic residues; that stretch reads EDSENEDDDS. Positions 176 to 200 are disordered; the sequence is EDSENEDDDSQNSPSTDHSLSSNES. 5 positions are modified to phosphoserine: S217, S255, S334, S343, and S345. Residues 466–493 form a disordered region; the sequence is YSDIPISDSSDEGDSYEGDSYEDDEDMA. Over residues 474-492 the composition is skewed to acidic residues; the sequence is SSDEGDSYEGDSYEDDEDM. Positions 594–656 constitute an R3H domain; the sequence is GLHIQNIKDE…HTSVVVEKIK (63 aa). The G-patch domain maps to 720–767; that stretch reads NENIGRRMLEKLGWKSGEGLGIQGNKGISEPIFAKIKKNRSGLRHSES.

This sequence belongs to the SQS1 family.

The protein resides in the cytoplasm. It is found in the nucleus. In terms of biological role, may be involved in splicing since overexpression antagonizes the suppression of splicing defects by SPP382 mutants. This is Protein SQS1 (SQS1) from Saccharomyces cerevisiae (strain YJM789) (Baker's yeast).